The chain runs to 107 residues: Inner membrane protein YgbE (107 aa).

Residues 1–20 lie on the Cytoplasmic side of the membrane; that stretch reads MRNSHNITLTNNDSLTEDEE. Residues 21–43 traverse the membrane as a helical segment; it reads TTWSLPGAVVGFISWLFALAMPM. Residues 44–52 lie on the Periplasmic side of the membrane; the sequence is LIYGSNTLF. The chain crosses the membrane as a helical span at residues 53-75; it reads FFIYTWPFFLALMPVAVVVGIAL. The Cytoplasmic segment spans residues 76–86; it reads HSLMDGKLRYS. The chain crosses the membrane as a helical span at residues 87 to 106; the sequence is IVFTLVTVGIMFGALFMWLL. Gly107 is a topological domain (periplasmic).

Its subcellular location is the cell inner membrane. The polypeptide is Inner membrane protein YgbE (ygbE) (Escherichia coli (strain K12)).